Reading from the N-terminus, the 261-residue chain is RING finger and CHY zinc finger domain-containing protein 1 (261 aa).

Residues 13–80 (QERGQRGCEH…AQQTCEECST (68 aa)) form a CHY-type zinc finger. The Zn(2+) site is built by Cys-20, His-22, Cys-33, Cys-34, Cys-40, Cys-43, His-44, His-50, Cys-62, Cys-65, Cys-75, Cys-78, Cys-87, Cys-90, His-101, Cys-102, Cys-105, Cys-108, His-118, Cys-119, Cys-122, Cys-125, His-134, and Cys-136. The CTCHY-type zinc finger occupies 82 to 144 (FGEYYCDICH…KCIENVSRQN (63 aa)). An RING-type zinc finger spans residues 145–189 (CPICLEDIHTSRVVAHVLPCGHLLHRTCYEEMLKEGYRCPLCMHS). Ser-257 is subject to Phosphoserine.

In terms of assembly, monomer and homodimer. Interacts with AR, MDM2, KAT5, PLAG1, PLAGL2, COPE, UBE2D2 and GORAB/NTKLBP1. In terms of processing, subject to ubiquitination and proteasomal degradation. Interaction with PLAGL2 or KAT5 enhances protein stability.

It localises to the nucleus. It is found in the nucleus speckle. The protein localises to the cytoplasm. The enzyme catalyses S-ubiquitinyl-[E2 ubiquitin-conjugating enzyme]-L-cysteine + [acceptor protein]-L-lysine = [E2 ubiquitin-conjugating enzyme]-L-cysteine + N(6)-ubiquitinyl-[acceptor protein]-L-lysine.. It participates in protein modification; protein ubiquitination. E3 ubiquitin-protein ligase that mediates ubiquitination of target proteins, including p53/TP53, TP73, HDAC1 and CDKN1B. Mediates ubiquitination and degradation of p53/TP53; preferentially acts on tetrameric p53/TP53. Catalyzes monoubiquitinates the translesion DNA polymerase POLH. Involved in the ribosome-associated quality control (RQC) pathway, which mediates the extraction of incompletely synthesized nascent chains from stalled ribosomes: RCHY1 acts downstream of NEMF and recognizes CAT tails associated with stalled nascent chains, leading to their ubiquitination and degradation. Its function is as follows. Has no E3 ubiquitin-protein ligase activity. The chain is RING finger and CHY zinc finger domain-containing protein 1 (RCHY1) from Homo sapiens (Human).